The chain runs to 251 residues: Aquaporin TIP1-1 (251 aa).

The residue at position 1 (Met-1) is an N-acetylmethionine. The Cytoplasmic segment spans residues 1–23 (MPIRNIAIGRPDEATRPDALKAA). Residues 24–44 (LAEFISTLIFVVAGSGSGMAF) traverse the membrane as a helical segment. Residues 45–56 (NKLTENGATTPS) are Vacuolar-facing. Residues 57–77 (GLVAAAVAHAFGLFVAVSVGA) traverse the membrane as a helical segment. At 78–103 (NISGGHVNPAVTFGAFIGGNITLLRG) the chain is on the cytoplasmic side. The NPA 1 motif lies at 85–87 (NPA). The helical transmembrane segment at 104–124 (ILYWIAQLLGSVVACLILKFA) threads the bilayer. Over 125–143 (TGGLAVPAFGLSAGVGVLN) the chain is Vacuolar. A helical membrane pass occupies residues 144 to 164 (AFVFEIVMTFGLVYTVYATAI). The Cytoplasmic portion of the chain corresponds to 165–172 (DPKNGSLG). The chain crosses the membrane as a helical span at residues 173–193 (TIAPIAIGFIVGANILAGGAF). Residues 194–218 (SGASMNPAVAFGPAVVSWTWTNHWV) lie on the Vacuolar side of the membrane. The short motif at 199–201 (NPA) is the NPA 2 element. Residues 219-239 (YWAGPLVGGGIAGLIYEVFFI) form a helical membrane-spanning segment. Topologically, residues 240 to 251 (NTTHEQLPTTDY) are cytoplasmic.

It belongs to the MIP/aquaporin (TC 1.A.8) family. TIP (TC 1.A.8.10) subfamily. In terms of assembly, interacts with cucumber mosaic virus (CMV) Protein 1a. In terms of tissue distribution, in all the vegetative organs, but not in seeds. Preferentially expressed in roots.

It localises to the vacuole membrane. In terms of biological role, water channel required to facilitate the transport of water, diffusion of amino acids and/or peptides from the vacuolar compartment to the cytoplasm. Does not promote glycerol permeability. May play a role in the control of cell turgor and cell expansion. Its function is impaired by Hg(2+). May be involved in a vesicle-based metabolite routing through or between pre-vacuolar compartments and the central vacuole. Transports urea in yeast cells in a pH-independent manner. Transports H(2)O(2) in yeast cells. The polypeptide is Aquaporin TIP1-1 (TIP1-1) (Arabidopsis thaliana (Mouse-ear cress)).